The chain runs to 247 residues: Carbonic anhydrase (247 aa).

The N-terminal stretch at 1–34 (MMFNKQIFTILILSLSLALAGSGCISEGAEDNVA) is a signal peptide. A substrate-binding site is contributed by 93–95 (RSD). Glu-96 serves as the catalytic Proton donor/acceptor. 109 to 110 (QD) is a substrate binding site. His-115 provides a ligand contact to Zn(2+). Glu-118 is an active-site residue. Zn(2+) is bound by residues His-151 and His-156. Substrate is bound at residue Asn-236.

Belongs to the gamma-class carbonic anhydrase family. In terms of assembly, homotrimer. Zn(2+) serves as cofactor.

It is found in the secreted. The enzyme catalyses hydrogencarbonate + H(+) = CO2 + H2O. In terms of biological role, reversible hydration of carbon dioxide. Important for growth on acetate. As a probably extracellular enzyme, it may support a H(+)/CH(3)COO(-) symport mechanism and/or conversion of CO(2) to HCO(3)(-), removing excess CO(2) produced by growth on acetate. This is Carbonic anhydrase from Methanosarcina thermophila (strain ATCC 43570 / DSM 1825 / OCM 12 / VKM B-1830 / TM-1).